An 851-amino-acid chain; its full sequence is DNA mismatch repair protein MutS (851 aa).

602–609 (GPNMSGKS) contributes to the ATP binding site.

It belongs to the DNA mismatch repair MutS family.

Functionally, this protein is involved in the repair of mismatches in DNA. It is possible that it carries out the mismatch recognition step. This protein has a weak ATPase activity. This is DNA mismatch repair protein MutS from Streptococcus pyogenes serotype M6 (strain ATCC BAA-946 / MGAS10394).